Here is a 227-residue protein sequence, read N- to C-terminus: Uridylate kinase (227 aa).

An ATP-binding site is contributed by 6-10; it reads KVSGK. Residue Gly-43 coordinates UMP. Residues Gly-44 and Arg-48 each coordinate ATP. Residues Asp-65 and 113–119 contribute to the UMP site; that span reads FQPGQST. Positions 139, 140, 145, and 148 each coordinate ATP.

This sequence belongs to the UMP kinase family. Homohexamer.

It is found in the cytoplasm. It catalyses the reaction UMP + ATP = UDP + ADP. It participates in pyrimidine metabolism; CTP biosynthesis via de novo pathway; UDP from UMP (UMPK route): step 1/1. With respect to regulation, inhibited by UTP. Catalyzes the reversible phosphorylation of UMP to UDP. This is Uridylate kinase from Sulfolobus acidocaldarius (strain ATCC 33909 / DSM 639 / JCM 8929 / NBRC 15157 / NCIMB 11770).